A 100-amino-acid polypeptide reads, in one-letter code: Aspartyl/glutamyl-tRNA(Asn/Gln) amidotransferase subunit C (100 aa).

It belongs to the GatC family. In terms of assembly, heterotrimer of A, B and C subunits.

It carries out the reaction L-glutamyl-tRNA(Gln) + L-glutamine + ATP + H2O = L-glutaminyl-tRNA(Gln) + L-glutamate + ADP + phosphate + H(+). The enzyme catalyses L-aspartyl-tRNA(Asn) + L-glutamine + ATP + H2O = L-asparaginyl-tRNA(Asn) + L-glutamate + ADP + phosphate + 2 H(+). Its function is as follows. Allows the formation of correctly charged Asn-tRNA(Asn) or Gln-tRNA(Gln) through the transamidation of misacylated Asp-tRNA(Asn) or Glu-tRNA(Gln) in organisms which lack either or both of asparaginyl-tRNA or glutaminyl-tRNA synthetases. The reaction takes place in the presence of glutamine and ATP through an activated phospho-Asp-tRNA(Asn) or phospho-Glu-tRNA(Gln). The chain is Aspartyl/glutamyl-tRNA(Asn/Gln) amidotransferase subunit C from Streptococcus thermophilus (strain ATCC BAA-491 / LMD-9).